The following is a 445-amino-acid chain: Tyrosine--tRNA ligase, mitochondrial (445 aa).

Tyr33 lines the L-tyrosine pocket. ATP is bound at residue Asp37. The 'HIGH' region motif lies at 38–47 (PTAASLHVGN). 5 residues coordinate L-tyrosine: Asp77, Tyr184, Gln188, Asp191, and Gln210. Positions 245 to 249 (KLGKS) match the 'KMSKS' region motif. Lys248 contacts ATP. The region spanning 384-445 (QPFSRLLRTL…GKRTFVLDSL (62 aa)) is the S4 RNA-binding domain.

Belongs to the class-I aminoacyl-tRNA synthetase family. As to quaternary structure, homodimer.

Its subcellular location is the mitochondrion matrix. It carries out the reaction tRNA(Tyr) + L-tyrosine + ATP = L-tyrosyl-tRNA(Tyr) + AMP + diphosphate + H(+). Its function is as follows. Catalyzes the attachment of tyrosine to tRNA(Tyr) in a two-step reaction: tyrosine is first activated by ATP to form Tyr-AMP and then transferred to the acceptor end of tRNA(Tyr). This Schizosaccharomyces pombe (strain 972 / ATCC 24843) (Fission yeast) protein is Tyrosine--tRNA ligase, mitochondrial.